The primary structure comprises 232 residues: Triggering receptor expressed on myeloid cells 1 (232 aa).

Positions 1 to 20 (MRKAGVWGLLWMLFIEEIQA) are cleaved as a signal peptide. One can recognise an Ig-like V-type domain in the interval 21 to 125 (AAEVFEEKCT…DPIILFHPVR (105 aa)). Residues 21 to 203 (AAEVFEEKCT…THVNRAPGIS (183 aa)) lie on the Extracellular side of the membrane. Cys41 and Cys109 are joined by a disulfide. Residues 152–186 (PLPVTTKLRPRPRPRPKPVTQPIPTSADRLSSPGF) form a disordered region. An N-linked (GlcNAc...) asparagine glycan is attached at Asn192. A helical membrane pass occupies residues 204-224 (IIIPAACGLLSKTLVFIGLFA). The Cytoplasmic portion of the chain corresponds to 225–232 (VTHRSFAS).

Monomer. Homomultimer; when activated. Interacts with TYROBP/DAP12. Interacts with TLR4. In terms of tissue distribution, detected in bone marrow, tongue, lung, liver, thymus, spleen, jejunum, ileum and lymph nodes.

The protein localises to the cell membrane. Its function is as follows. Cell surface receptor that plays important roles in innate and adaptive immunity by amplifying inflammatory responses. Upon activation by various ligands such as PGLYRP1, HMGB1 or HSP70, multimerizes and forms a complex with transmembrane adapter TYROBP/DAP12. In turn, initiates a SYK-mediated cascade of tyrosine phosphorylation, activating multiple downstream mediators such as BTK, MAPK1, MAPK3 or phospholipase C-gamma. This cascade promotes the neutrophil- and macrophage-mediated release of pro-inflammatory cytokines and/or chemokines, as well as their migration and thereby amplifies inflammatory responses that are triggered by bacterial and fungal infections. By also promoting the amplification of inflammatory signals that are initially triggered by Toll-like receptor (TLR) and NOD-like receptor engagement, plays a major role in the pathophysiology of acute and chronic inflammatory diseases of different etiologies including septic shock and atherosclerosis. In Bos taurus (Bovine), this protein is Triggering receptor expressed on myeloid cells 1 (TREM1).